The following is a 1758-amino-acid chain: Condensin-2 complex subunit hcp-6 (1758 aa).

4 disordered regions span residues 428-501 (DPGA…KAKE), 969-1008 (ENGSSDASTVNPDMPSVHHTRPPTQLSEVPSSQKSSKGGM), 1379-1460 (QKRL…ARLL), and 1500-1656 (SKQA…LSRG). Residues 438–462 (EQNEEEDEEEEGEDEEEEEENEQDD) are compositionally biased toward acidic residues. A compositionally biased stretch (basic and acidic residues) spans 463-473 (VAVKEEEQSDK). Positions 474 to 484 (SDEENDGDNEE) are enriched in acidic residues. Residues 485-501 (NVSKKKEEKKKEKKAKE) show a composition bias toward basic and acidic residues. Residues 969–979 (ENGSSDASTVN) are compositionally biased toward polar residues. Residues 999 to 1008 (SSQKSSKGGM) show a composition bias toward low complexity. Positions 1326–1385 (CIEHKNDIDEILQDNRQLKDEMMFELQRVKQRTEEANRILDEYLKRVAEFKKQQKRLSKS) form a coiled coil. A compositionally biased stretch (acidic residues) spans 1414 to 1423 (EDQENVEEEV). 2 stretches are compositionally biased toward basic and acidic residues: residues 1424–1437 (EMRTPQKKNPDADV) and 1500–1512 (SKQADKTEEKTIV). 2 stretches are compositionally biased toward polar residues: residues 1602 to 1618 (ISANVTLRRSRRGQSTE) and 1640 to 1651 (VPTSSSGNTEND).

In terms of assembly, component of the condensin-2 complex.

The protein resides in the nucleus. It localises to the chromosome. The protein localises to the centromere. Its function is as follows. Chromosomal protein which is recruited to mitotic chromosomes by hcp-3 (CENP-A) and hcp-4 (CENP-C). Involved in chromosome segregation during mitosis, playing a role in chromosome condensation and in maintaining chromosome morphology, rigidity and orientation during mitosis. This Caenorhabditis elegans protein is Condensin-2 complex subunit hcp-6.